The sequence spans 323 residues: Prostaglandin F synthase 1 (323 aa).

NADP(+) contacts are provided by residues 20–24 (GFGTY) and D50. Y55 acts as the Proton donor in catalysis. A substrate-binding site is contributed by H117. Residues 166-167 (SN), Q190, 216-221 (YAALGA), and 270-280 (KSFNKKRIKEN) contribute to the NADP(+) site.

Belongs to the aldo/keto reductase family. As to quaternary structure, monomer. Post-translationally, the N-terminus is blocked.

Its subcellular location is the cytoplasm. The enzyme catalyses prostaglandin F2alpha + NADP(+) = prostaglandin D2 + NADPH + H(+). It functions in the pathway lipid metabolism; prostaglandin biosynthesis. Catalyzes the reduction of PGD(2) and PGH(2) to PGF(2 alpha) and a stereoisomer, respectively. It has a broad substrate specificity and also reduces other carbonyl compounds. This chain is Prostaglandin F synthase 1, found in Bos taurus (Bovine).